A 577-amino-acid polypeptide reads, in one-letter code: Cytidine monophosphate-N-acetylneuraminic acid hydroxylase (577 aa).

The propeptide occupies 1–4 (MMDR). The Rieske domain maps to 14–112 (LSPAEVANLK…IEMDENNGLS (99 aa)). Positions 54, 56, 75, and 78 each coordinate [2Fe-2S] cluster.

Belongs to the CMP-Neu5Ac hydroxylase family. The cofactor is [2Fe-2S] cluster. As to expression, expressed in all tissues tested, except in brain.

It localises to the cytoplasm. Its subcellular location is the endoplasmic reticulum. The enzyme catalyses CMP-N-acetyl-beta-neuraminate + 2 Fe(II)-[cytochrome b5] + O2 + 2 H(+) = CMP-N-glycoloyl-beta-neuraminate + 2 Fe(III)-[cytochrome b5] + H2O. The protein operates within amino-sugar metabolism; N-acetylneuraminate metabolism. Functionally, sialic acids are components of carbohydrate chains of glycoconjugates and are involved in cell-cell recognition and cell-pathogen interactions. Catalyzes the conversion of CMP-N-acetylneuraminic acid (CMP-Neu5Ac) into its hydroxylated derivative CMP-N-glycolylneuraminic acid (CMP-Neu5Gc), a sialic acid abundantly expressed at the surface of many cells. The protein is Cytidine monophosphate-N-acetylneuraminic acid hydroxylase (Cmah) of Mus musculus (Mouse).